A 117-amino-acid chain; its full sequence is Large ribosomal subunit protein uL18 (117 aa).

Belongs to the universal ribosomal protein uL18 family. As to quaternary structure, part of the 50S ribosomal subunit; part of the 5S rRNA/L5/L18/L25 subcomplex. Contacts the 5S and 23S rRNAs.

Functionally, this is one of the proteins that bind and probably mediate the attachment of the 5S RNA into the large ribosomal subunit, where it forms part of the central protuberance. The polypeptide is Large ribosomal subunit protein uL18 (Edwardsiella ictaluri (strain 93-146)).